The following is a 358-amino-acid chain: Presenilin hop-1 (358 aa).

Residues 1–12 (MPRTKRVYSGKT) lie on the Cytoplasmic side of the membrane. The chain crosses the membrane as a helical span at residues 13 to 33 (ITGVLYPVAICMLFVAINVKL). Residues 34–57 (SQPEQQEQSKVVYGLFHSYDTADS) lie on the Lumenal side of the membrane. A helical transmembrane segment spans residues 58–78 (GTITLYLIGFLILTTSLGVFC). Topologically, residues 79–86 (YQMKFYKA) are cytoplasmic. Residues 87–107 (IKVYVLANSIGILLVYSVFHF) form a helical membrane-spanning segment. Topologically, residues 108–115 (QRIAEAQS) are lumenal. A helical transmembrane segment spans residues 116–136 (IPVSVPTFFFLILQFGGLGIT). At 137–148 (CLHWKSHRRLHQ) the chain is on the cytoplasmic side. Residues 149–169 (FYLIMLAGLTAIFILNILPDW) form a helical membrane-spanning segment. A topological domain (lumenal) is located at residue Thr170. A helical transmembrane segment spans residues 171-191 (VWMALTAISFWDIVAVLTPCG). Asp182 is an active-site residue. The Cytoplasmic portion of the chain corresponds to 192-273 (PLKMLVETAN…EVREVEGTIR (82 aa)). The segment covering 221–240 (EVDSPDTTRSNSTPLTEFNN) has biased composition (polar residues). A disordered region spans residues 221 to 242 (EVDSPDTTRSNSTPLTEFNNSS). Residues 274 to 294 (LGMGDFVFYSLMLGNTVQTCP) traverse the membrane as a helical segment. Asp278 is a catalytic residue. Topologically, residues 295–297 (LPT) are lumenal. The helical transmembrane segment at 298-318 (VVACFVSNLVGLTITLPIVTL) threads the bilayer. Residues 319–321 (SQT) lie on the Cytoplasmic side of the membrane. The helical intramembrane region spans 322–342 (ALPALPFPLAIAAIFYFSSHI). The PAL signature appears at 324 to 326 (PAL). Over 343–358 (ALTPFTDLCTSQLILI) the chain is Cytoplasmic.

Belongs to the peptidase A22A family. Homodimer. Component of the gamma-secretase complex, a complex probably composed of the presenilin homodimer (sel-12, hop-1 or spe-4), nicastrin (aph-2), aph-1 and pen-2. In terms of tissue distribution, weakly expressed.

The protein localises to the endoplasmic reticulum membrane. It localises to the golgi apparatus membrane. Functionally, probable catalytic subunit of the gamma-secretase complex, an endoprotease complex that catalyzes the intramembrane cleavage of integral membrane proteins such as Notch receptors (lin-12 or glp-1). Probably works redundantly of lin-12, which provides more presenilin function. This chain is Presenilin hop-1 (hop-1), found in Caenorhabditis elegans.